Reading from the N-terminus, the 717-residue chain is Polyribonucleotide nucleotidyltransferase (717 aa).

Mg(2+)-binding residues include Asp488 and Asp494. One can recognise a KH domain in the interval 555–614 (PRIEVMNIPVDKIREVIGSGGKVIREIVEKTGAKINIDDDGTVKIASASAKEIEAARKWI). The S1 motif domain maps to 624 to 692 (GQVYEGTVVK…ERGKVRLSMK (69 aa)).

It belongs to the polyribonucleotide nucleotidyltransferase family. It depends on Mg(2+) as a cofactor.

The protein resides in the cytoplasm. The enzyme catalyses RNA(n+1) + phosphate = RNA(n) + a ribonucleoside 5'-diphosphate. Its function is as follows. Involved in mRNA degradation. Catalyzes the phosphorolysis of single-stranded polyribonucleotides processively in the 3'- to 5'-direction. This is Polyribonucleotide nucleotidyltransferase from Rhizobium meliloti (strain 1021) (Ensifer meliloti).